Consider the following 257-residue polypeptide: Global transcriptional regulator CodY (257 aa).

A GAF domain region spans residues 1–155 (MSLLSKTREL…AATVIGMEIL (155 aa)). Positions 203–222 (ASKVADGVGITRSVIVNALR) form a DNA-binding region, H-T-H motif.

It belongs to the CodY family.

It localises to the cytoplasm. Its function is as follows. DNA-binding global transcriptional regulator which is involved in the adaptive response to starvation and acts by directly or indirectly controlling the expression of numerous genes in response to nutrient availability. During rapid exponential growth, CodY is highly active and represses genes whose products allow adaptation to nutrient depletion. The polypeptide is Global transcriptional regulator CodY (Staphylococcus aureus (strain bovine RF122 / ET3-1)).